The primary structure comprises 382 residues: UDP-4-amino-4-deoxy-L-arabinose--oxoglutarate aminotransferase (382 aa).

Residue Lys182 is modified to N6-(pyridoxal phosphate)lysine.

Belongs to the DegT/DnrJ/EryC1 family. ArnB subfamily. Homodimer. Pyridoxal 5'-phosphate serves as cofactor.

The catalysed reaction is UDP-4-amino-4-deoxy-beta-L-arabinose + 2-oxoglutarate = UDP-beta-L-threo-pentopyranos-4-ulose + L-glutamate. It participates in nucleotide-sugar biosynthesis; UDP-4-deoxy-4-formamido-beta-L-arabinose biosynthesis; UDP-4-deoxy-4-formamido-beta-L-arabinose from UDP-alpha-D-glucuronate: step 2/3. Its pathway is bacterial outer membrane biogenesis; lipopolysaccharide biosynthesis. In terms of biological role, catalyzes the conversion of UDP-4-keto-arabinose (UDP-Ara4O) to UDP-4-amino-4-deoxy-L-arabinose (UDP-L-Ara4N). The modified arabinose is attached to lipid A and is required for resistance to polymyxin and cationic antimicrobial peptides. The chain is UDP-4-amino-4-deoxy-L-arabinose--oxoglutarate aminotransferase from Pectobacterium atrosepticum (strain SCRI 1043 / ATCC BAA-672) (Erwinia carotovora subsp. atroseptica).